The sequence spans 192 residues: Transmembrane protein 276 (192 aa).

The N-terminal stretch at 1 to 32 (MVSKPRNEWSTALSHLVLAGVSLHAAVSSVQS) is a signal peptide. The next 4 helical transmembrane spans lie at 35–55 (GAAAGFLLQTLAAVIMLAPEL), 63–83 (AGAWVATVIGLPLLAFDFHWV), 92–112 (LLLGGGMVLAVAGDHLGPEGC), and 114–134 (VAGQAVLLVVAVTILIVAVFT).

Its subcellular location is the membrane. The polypeptide is Transmembrane protein 276 (Rattus norvegicus (Rat)).